The following is a 295-amino-acid chain: sn-glycerol-3-phosphate transport system permease protein UgpA (295 aa).

Residues methionine 1–serine 11 are Cytoplasmic-facing. The chain crosses the membrane as a helical span at residues tryptophan 12 to proline 32. The Periplasmic segment spans residues alanine 33–leucine 76. An ABC transmembrane type-1 domain is found at leucine 76–glutamine 284. The helical transmembrane segment at isoleucine 77 to valine 97 threads the bilayer. The Cytoplasmic portion of the chain corresponds to aspartate 98–threonine 109. A helical membrane pass occupies residues leucine 110–phenylalanine 130. The Periplasmic portion of the chain corresponds to asparagine 131–alanine 157. Residues methionine 158–leucine 178 traverse the membrane as a helical segment. Topologically, residues alanine 179–valine 207 are cytoplasmic. A helical membrane pass occupies residues leucine 208–phenylalanine 228. The Periplasmic segment spans residues aspartate 229–aspartate 262. The chain crosses the membrane as a helical span at residues leucine 263–isoleucine 283. Topologically, residues glutamine 284–glutamine 295 are cytoplasmic.

It belongs to the binding-protein-dependent transport system permease family. UgpAE subfamily. The complex is composed of two ATP-binding proteins (UgpC), two transmembrane proteins (UgpA and UgpE) and a solute-binding protein (UgpB).

It is found in the cell inner membrane. Its function is as follows. Part of the ABC transporter complex UgpBAEC involved in sn-glycerol-3-phosphate (G3P) import. Probably responsible for the translocation of the substrate across the membrane. The polypeptide is sn-glycerol-3-phosphate transport system permease protein UgpA (ugpA) (Pectobacterium atrosepticum (strain SCRI 1043 / ATCC BAA-672) (Erwinia carotovora subsp. atroseptica)).